Consider the following 201-residue polypeptide: Large ribosomal subunit protein mL61 (201 aa).

Residues 87 to 118 form a disordered region; sequence RDDKDAKPSSTPFPTSSADGSSPAPKPAQGER. Residues 94-106 are compositionally biased toward polar residues; sequence PSSTPFPTSSADG.

The protein belongs to the mitochondrion-specific ribosomal protein mL61 family. Component of the mitochondrial large ribosomal subunit (mt-LSU). Mature N.crassa 74S mitochondrial ribosomes consist of a small (37S) and a large (54S) subunit. The 37S small subunit contains a 16S ribosomal RNA (16S mt-rRNA) and 32 different proteins. The 54S large subunit contains a 23S rRNA (23S mt-rRNA) and 42 different proteins.

It localises to the mitochondrion. In terms of biological role, component of the mitochondrial ribosome (mitoribosome), a dedicated translation machinery responsible for the synthesis of mitochondrial genome-encoded proteins, including at least some of the essential transmembrane subunits of the mitochondrial respiratory chain. The mitoribosomes are attached to the mitochondrial inner membrane and translation products are cotranslationally integrated into the membrane. The protein is Large ribosomal subunit protein mL61 (mrp49) of Neurospora crassa (strain ATCC 24698 / 74-OR23-1A / CBS 708.71 / DSM 1257 / FGSC 987).